We begin with the raw amino-acid sequence, 180 residues long: Thiol:disulfide interchange protein TxlA homolog (180 aa).

Residues 10–26 (LLAVVAIALSAAVYLGF) form a helical membrane-spanning segment. The region spanning 34–143 (SLEAQAQRAI…LEQNITALVA (110 aa)) is the Thioredoxin domain. The cysteines at positions 64 and 67 are disulfide-linked.

Belongs to the thioredoxin family.

It localises to the cell membrane. Functionally, required for disulfide bond formation in some proteins. Acts by transferring its disulfide bond to other proteins and is reduced in the process. This Synechocystis sp. (strain ATCC 27184 / PCC 6803 / Kazusa) protein is Thiol:disulfide interchange protein TxlA homolog (txlA).